A 103-amino-acid polypeptide reads, in one-letter code: SLC35A4 upstream open reading frame protein (103 aa).

Residues 62–84 (ASAVLGFAVGTCTGIYAAQAYAV) traverse the membrane as a helical segment.

The protein resides in the mitochondrion inner membrane. Required to maintain cellular respiration. The sequence is that of SLC35A4 upstream open reading frame protein from Homo sapiens (Human).